A 223-amino-acid polypeptide reads, in one-letter code: Urease accessory protein UreF (223 aa).

This sequence belongs to the UreF family. UreD, UreF and UreG form a complex that acts as a GTP-hydrolysis-dependent molecular chaperone, activating the urease apoprotein by helping to assemble the nickel containing metallocenter of UreC. The UreE protein probably delivers the nickel.

Its subcellular location is the cytoplasm. In terms of biological role, required for maturation of urease via the functional incorporation of the urease nickel metallocenter. In Rhizobium leguminosarum bv. trifolii (strain WSM2304), this protein is Urease accessory protein UreF.